A 38-amino-acid polypeptide reads, in one-letter code: Potassium channel toxin alpha-KTx 2.13 (38 aa).

3 disulfide bridges follow: C7/C29, C13/C34, and C17/C36.

This sequence belongs to the short scorpion toxin superfamily. Potassium channel inhibitor family. Alpha-KTx 02 subfamily. Expressed by the venom gland.

Its subcellular location is the secreted. Selective inhibitor of voltage-gated potassium channels, blocks the Kv1.2/KCNA2 (Kd=1.3 nM) and Kv1.3/KCNA3 (Kd=7.2 nM) channels. Association and dissociation rates of the toxin are slower for Kv1.2/KCNA2 than for Kv1.3/KCNA3. The protein is Potassium channel toxin alpha-KTx 2.13 of Centruroides suffusus (Durango bark scorpion).